A 526-amino-acid polypeptide reads, in one-letter code: Probable feruloyl esterase B-2 (526 aa).

The first 18 residues, M1–A18, serve as a signal peptide directing secretion. 2 disulfide bridges follow: C27–C74 and C62–C113. N52 is a glycosylation site (N-linked (GlcNAc...) asparagine). N-linked (GlcNAc...) asparagine glycosylation is present at N137. Intrachain disulfides connect C186-C441, C255-C272, C281-C291, and C503-C525. S187 acts as the Acyl-ester intermediate in catalysis. Residue N233 is glycosylated (N-linked (GlcNAc...) asparagine). Ca(2+)-binding residues include D256, D259, A261, D263, and I265. N311 is a glycosylation site (N-linked (GlcNAc...) asparagine). Catalysis depends on charge relay system residues D400 and H440. The N-linked (GlcNAc...) asparagine glycan is linked to N516.

It belongs to the tannase family.

It is found in the secreted. The catalysed reaction is feruloyl-polysaccharide + H2O = ferulate + polysaccharide.. Involved in degradation of plant cell walls. Hydrolyzes the feruloyl-arabinose ester bond in arabinoxylans as well as the feruloyl-galactose and feruloyl-arabinose ester bonds in pectin. The protein is Probable feruloyl esterase B-2 (faeB-2) of Aspergillus fumigatus (strain CBS 144.89 / FGSC A1163 / CEA10) (Neosartorya fumigata).